The chain runs to 283 residues: Bifunctional protein FolD (283 aa).

Residues 166–168 (GRS), Ser-191, and Ile-232 each bind NADP(+).

It belongs to the tetrahydrofolate dehydrogenase/cyclohydrolase family. Homodimer.

It catalyses the reaction (6R)-5,10-methylene-5,6,7,8-tetrahydrofolate + NADP(+) = (6R)-5,10-methenyltetrahydrofolate + NADPH. The catalysed reaction is (6R)-5,10-methenyltetrahydrofolate + H2O = (6R)-10-formyltetrahydrofolate + H(+). The protein operates within one-carbon metabolism; tetrahydrofolate interconversion. Catalyzes the oxidation of 5,10-methylenetetrahydrofolate to 5,10-methenyltetrahydrofolate and then the hydrolysis of 5,10-methenyltetrahydrofolate to 10-formyltetrahydrofolate. This chain is Bifunctional protein FolD, found in Rickettsia bellii (strain RML369-C).